A 423-amino-acid chain; its full sequence is Histidine--tRNA ligase (423 aa).

Belongs to the class-II aminoacyl-tRNA synthetase family.

It localises to the cytoplasm. The enzyme catalyses tRNA(His) + L-histidine + ATP = L-histidyl-tRNA(His) + AMP + diphosphate + H(+). This Picrophilus torridus (strain ATCC 700027 / DSM 9790 / JCM 10055 / NBRC 100828 / KAW 2/3) protein is Histidine--tRNA ligase.